The following is a 1253-amino-acid chain: MKKTLQDEIEAILRKRIMVLDGGMGTMIQRYKLSEENFQGQEFKDHSRPLKGNNDILSITQPDVIYQIHKEYLLAGADIIETNTFSSTSIAQADYGLEHLAYRMNKCSADVARKAAEEITLQTGVKRFVAGSLGPTNKTLSVSPSVERPDYRNITFDELVEAYQEQAKGLLDGGVDILLIETIFDTANAKAALFALQKLFEENYASPRPIFISGTIVDKSGRTLSGQTGEAFVTSVSHSDPLCIGLNCALGAAEMRPFIETIGKCTTAYVLCYPNAGLPNTFGDYDETPAMMAMHLKDFAVDGLVNVVGGCCGSTPDHIREIAEAVKNCKPRVPPDSVFEGHMLLSGLEPFRIGPYTNFVNIGERCNVAGSKKFAKLIMAGNYEEALSVAKVQVEMGAQVLDINMDDGMLDGPSAMTKFCNFIASEPDIAKVPLCIDSSNFAVIEAGLKCCQGKCIVNSISLKEGEEDFLEKARKIKKFGAAVVVMAFDEEGQATETDVKVSVCTRAYHLLVEKVGFNPNDIIFDPNILTIGTGMEEHNLYAINFIHATRVIKETLPGVRISGGLSNLSFAFRGMDAIREAMHGVFLYHAIKFGMDMGIVNAGSLPVYDDIHKDLLQLCEDLIWNRDAEATEKLLRYAQTHGKGGKKVIQTDEWRNGSIEERLEYALVKGIEKHIVEDTEEARLNREKYPRPLNIIEGPLMNGMKVVGDLFGAGKMFLPQVIKSARVMKKAVGHLIPFMEKEREEARVLNGSVEEEDPYQGTIVLATVKGDVHDIGKNIVGVVLGCNNFRVIDLGVMTPCDKILQAALDHKADIIGLSGLITPSLDEMIFVAKEMERLAIKIPLLIGGATTSRTHTAVKIAPRYSAPVIHVLDASKSVVVCSQLLDENLKDDYFEEILEEYEDIRQDHYESLKERKYLPLSQARKHSFHIDWLSEPHPVKPTFIGTQVFEDYNLQKLVDYIDWKPFFDVWQLRGKYPNRGFPKIFNDKAVGEEARKVYEDAQNMLSILISRKKLRARGVVGFWPAQSVQDDIHLYAEGAVPQAAEPIATFYGLRQQAEKDSSSTDPYHCLSDFVAPLHSGVRDYLGLFAVACFGVEELSKAYEDDGDDYSSIMVKALGDRLAEAFAEELHERVRRELWAYCGSEQLGVTDLRKLRYEGIRPAPGYPSQPDHTEKLTMWRLANIEQATGIRLTESLAMAPASAVSGLYFSNVKSKYFAVGKISKDQIEDYALRKNMSVAEVEKWLGPILGYDTD.

One can recognise a Hcy-binding domain in the interval 6–326 (QDEIEAILRK…DHIREIAEAV (321 aa)). Positions 248, 311, and 312 each coordinate Zn(2+). The 262-residue stretch at 359–620 (FVNIGERCNV…IHKDLLQLCE (262 aa)) folds into the Pterin-binding domain. Residues 370-372 (GSK), Asp437, Asn458, Asp525, Asn567, Arg573, and Arg579 contribute to the (6S)-5,6,7,8-tetrahydrofolate site. The region spanning 650 to 747 (QTDEWRNGSI…FMEKEREEAR (98 aa)) is the B12-binding N-terminal domain. Residues Glu697, 770–774 (GDVHD), His773, Ser818, Thr822, and Ala874 contribute to the methylcob(III)alamin site. Positions 760–895 (QGTIVLATVK…DENLKDDYFE (136 aa)) constitute a B12-binding domain. The 343-residue stretch at 911–1253 (SLKERKYLPL…LGPILGYDTD (343 aa)) folds into the AdoMet activation domain. Residues Asp962, Arg1160, and 1215-1216 (YF) contribute to the S-adenosyl-L-methionine site. Phosphothreonine is present on Thr1252.

It belongs to the vitamin-B12 dependent methionine synthase family. Monomer. Dimer. Forms a multiprotein complex with MMACHC, MMADHC and MTRR. Methylcob(III)alamin is required as a cofactor. Requires Zn(2+) as cofactor.

It is found in the cytoplasm. The catalysed reaction is (6S)-5-methyl-5,6,7,8-tetrahydrofolate + L-homocysteine = (6S)-5,6,7,8-tetrahydrofolate + L-methionine. It functions in the pathway amino-acid biosynthesis; L-methionine biosynthesis via de novo pathway; L-methionine from L-homocysteine (MetH route): step 1/1. Functionally, catalyzes the transfer of a methyl group from methylcob(III)alamin (MeCbl) to homocysteine, yielding enzyme-bound cob(I)alamin and methionine in the cytosol. MeCbl is an active form of cobalamin (vitamin B12) used as a cofactor for methionine biosynthesis. Cob(I)alamin form is regenerated to MeCbl by a transfer of a methyl group from 5-methyltetrahydrofolate. The processing of cobalamin in the cytosol occurs in a multiprotein complex composed of at least MMACHC, MMADHC, MTRR (methionine synthase reductase) and MTR which may contribute to shuttle safely and efficiently cobalamin towards MTR in order to produce methionine. This is Methionine synthase (Mtr) from Rattus norvegicus (Rat).